Reading from the N-terminus, the 273-residue chain is Large ribosomal subunit protein uL2 (273 aa).

The tract at residues 224-263 (AMNPVDHPHGGGEGRNFGKHPVTPWGLQTKGKKTRKNKRT) is disordered. A compositionally biased stretch (basic residues) spans 253–263 (KGKKTRKNKRT).

Belongs to the universal ribosomal protein uL2 family. Part of the 50S ribosomal subunit. Forms a bridge to the 30S subunit in the 70S ribosome.

In terms of biological role, one of the primary rRNA binding proteins. Required for association of the 30S and 50S subunits to form the 70S ribosome, for tRNA binding and peptide bond formation. It has been suggested to have peptidyltransferase activity; this is somewhat controversial. Makes several contacts with the 16S rRNA in the 70S ribosome. The protein is Large ribosomal subunit protein uL2 of Buchnera aphidicola subsp. Schizaphis graminum (strain Sg).